A 150-amino-acid chain; its full sequence is Troponin C, isoform 2B (150 aa).

M1 bears the N-acetylmethionine mark. 4 consecutive EF-hand domains span residues 7 to 42, 43 to 78, 83 to 118, and 119 to 150; these read EQLS…MGVK, ISEK…FLIE, ALKA…LDNR, and LTEE…MMNG. 5 residues coordinate Ca(2+): D56, D58, S60, E62, and E67. Ca(2+) is bound by residues D132, D134, S136, T138, and E143.

It belongs to the troponin C family.

In terms of biological role, troponin is the central regulatory protein of striated muscle contraction. Tn consists of three components: Tn-I which is the inhibitor of actomyosin ATPase, Tn-T which contains the binding site for tropomyosin and Tn-C. The binding of calcium to Tn-C abolishes the inhibitory action of Tn on actin filaments. The sequence is that of Troponin C, isoform 2B from Homarus americanus (American lobster).